We begin with the raw amino-acid sequence, 429 residues long: 3-phosphoshikimate 1-carboxyvinyltransferase (429 aa).

The 3-phosphoshikimate site is built by Lys-23, Ser-24, and Arg-28. Lys-23 is a binding site for phosphoenolpyruvate. The phosphoenolpyruvate site is built by Gly-95 and Arg-123. Positions 168, 170, 316, and 343 each coordinate 3-phosphoshikimate. Gln-170 is a phosphoenolpyruvate binding site. Asp-316 (proton acceptor) is an active-site residue. Residues Arg-347 and Arg-389 each contribute to the phosphoenolpyruvate site.

This sequence belongs to the EPSP synthase family. Monomer.

The protein localises to the cytoplasm. It carries out the reaction 3-phosphoshikimate + phosphoenolpyruvate = 5-O-(1-carboxyvinyl)-3-phosphoshikimate + phosphate. It participates in metabolic intermediate biosynthesis; chorismate biosynthesis; chorismate from D-erythrose 4-phosphate and phosphoenolpyruvate: step 6/7. In terms of biological role, catalyzes the transfer of the enolpyruvyl moiety of phosphoenolpyruvate (PEP) to the 5-hydroxyl of shikimate-3-phosphate (S3P) to produce enolpyruvyl shikimate-3-phosphate and inorganic phosphate. In Oceanobacillus iheyensis (strain DSM 14371 / CIP 107618 / JCM 11309 / KCTC 3954 / HTE831), this protein is 3-phosphoshikimate 1-carboxyvinyltransferase.